Reading from the N-terminus, the 938-residue chain is Isoleucine--tRNA ligase (938 aa).

The short motif at 58–68 (PYANGNIHIGH) is the 'HIGH' region element. Glu561 provides a ligand contact to L-isoleucyl-5'-AMP. The 'KMSKS' region signature appears at 602 to 606 (KMSKS). An ATP-binding site is contributed by Lys605. Zn(2+) contacts are provided by Cys901, Cys904, Cys921, and Cys924.

The protein belongs to the class-I aminoacyl-tRNA synthetase family. IleS type 1 subfamily. Monomer. It depends on Zn(2+) as a cofactor.

The protein localises to the cytoplasm. The catalysed reaction is tRNA(Ile) + L-isoleucine + ATP = L-isoleucyl-tRNA(Ile) + AMP + diphosphate. Functionally, catalyzes the attachment of isoleucine to tRNA(Ile). As IleRS can inadvertently accommodate and process structurally similar amino acids such as valine, to avoid such errors it has two additional distinct tRNA(Ile)-dependent editing activities. One activity is designated as 'pretransfer' editing and involves the hydrolysis of activated Val-AMP. The other activity is designated 'posttransfer' editing and involves deacylation of mischarged Val-tRNA(Ile). This chain is Isoleucine--tRNA ligase, found in Yersinia pestis bv. Antiqua (strain Angola).